The following is a 293-amino-acid chain: 4-diphosphocytidyl-2-C-methyl-D-erythritol kinase (293 aa).

Residue K16 is part of the active site. Position 99-109 (99-109 (PMGAGLGGGSS)) interacts with ATP. D141 is an active-site residue.

This sequence belongs to the GHMP kinase family. IspE subfamily.

The catalysed reaction is 4-CDP-2-C-methyl-D-erythritol + ATP = 4-CDP-2-C-methyl-D-erythritol 2-phosphate + ADP + H(+). Its pathway is isoprenoid biosynthesis; isopentenyl diphosphate biosynthesis via DXP pathway; isopentenyl diphosphate from 1-deoxy-D-xylulose 5-phosphate: step 3/6. Its function is as follows. Catalyzes the phosphorylation of the position 2 hydroxy group of 4-diphosphocytidyl-2C-methyl-D-erythritol. The chain is 4-diphosphocytidyl-2-C-methyl-D-erythritol kinase from Paraburkholderia phytofirmans (strain DSM 17436 / LMG 22146 / PsJN) (Burkholderia phytofirmans).